The sequence spans 314 residues: MYLLVFKLFLFLSLLQISVSARNLASQEPNQFQLLKYHKGALLSGKISVNLIWYGKFKPSQRAIISDFITSLTHTSPTSKTLHQPSVATWWKTTEKYYKLATPSKNSSPLSLTLGKQIIDESCSLGKSLTDKKIQTLASKGDQRNAINVVLTSADVTVTGFGMSRCGTHGHARGLGKRGSKFAYIWVGNSETQCPGQCAWPFHAPVYGPQSPPLVAPNNDVGLDGMVINLASLLAGTATNPFGNGYYQGPQNAPLEAASACPGVYGKGAYPGYAGDLLVDTTTGGSFNAYGANGRKFLLPALYDPTTSACSTMV.

Positions 1–21 (MYLLVFKLFLFLSLLQISVSA) are cleaved as a signal peptide.

The protein belongs to the EXORDIUM family. In terms of tissue distribution, expressed in root tips, vascular tissue of roots, shoot apex, rosette leaves and embryos.

The protein resides in the secreted. It is found in the extracellular space. It localises to the apoplast. Its function is as follows. Required for cell expansion in leaves. May mediate brassinosteroid (BR)-induced leaf growth. May play a role in the control of BR responses in roots. May be involved in signaling processes that coordinate BR responses with environmental or developmental signals. This is Protein EXORDIUM (EXO) from Arabidopsis thaliana (Mouse-ear cress).